A 134-amino-acid chain; its full sequence is Small ribosomal subunit protein uS11 (134 aa).

The tract at residues Met1 to Val21 is disordered. A compositionally biased stretch (basic residues) spans Ala9–Val21.

Belongs to the universal ribosomal protein uS11 family. As to quaternary structure, part of the 30S ribosomal subunit. Interacts with proteins S7 and S18. Binds to IF-3.

Functionally, located on the platform of the 30S subunit, it bridges several disparate RNA helices of the 16S rRNA. Forms part of the Shine-Dalgarno cleft in the 70S ribosome. This Thermobifida fusca (strain YX) protein is Small ribosomal subunit protein uS11.